The sequence spans 190 residues: Peptidyl-tRNA hydrolase (190 aa).

Residue tyrosine 18 participates in tRNA binding. The active-site Proton acceptor is the histidine 23. Residues phenylalanine 69, asparagine 71, and asparagine 117 each contribute to the tRNA site.

Belongs to the PTH family. As to quaternary structure, monomer.

The protein localises to the cytoplasm. It catalyses the reaction an N-acyl-L-alpha-aminoacyl-tRNA + H2O = an N-acyl-L-amino acid + a tRNA + H(+). Hydrolyzes ribosome-free peptidyl-tRNAs (with 1 or more amino acids incorporated), which drop off the ribosome during protein synthesis, or as a result of ribosome stalling. Functionally, catalyzes the release of premature peptidyl moieties from peptidyl-tRNA molecules trapped in stalled 50S ribosomal subunits, and thus maintains levels of free tRNAs and 50S ribosomes. In Rhodococcus opacus (strain B4), this protein is Peptidyl-tRNA hydrolase.